We begin with the raw amino-acid sequence, 584 residues long: Kinesin-like protein KIN-10C (584 aa).

The region spanning 11 to 324 (PVRVVLRVRP…VSLAARSRHV (314 aa)) is the Kinesin motor domain. Position 99 to 106 (99 to 106 (GATGSGKT)) interacts with ATP. 2 disordered regions span residues 377–398 (SMSHKKQSASGRVSGRGKAMDQ) and 445–469 (DKTGSSLRKALSPISSNMDPQKQRT).

Belongs to the TRAFAC class myosin-kinesin ATPase superfamily. Kinesin family. KIN-10 subfamily.

The protein is Kinesin-like protein KIN-10C of Oryza sativa subsp. japonica (Rice).